A 413-amino-acid chain; its full sequence is Ureide permease 5 (413 aa).

Topologically, residues 1-18 (MMIAQELGIYVVESKGGA) are extracellular. The chain crosses the membrane as a helical span at residues 19–39 (ILCLLLSLLCLGTWPALMALL). Topologically, residues 40–50 (ERRGRLPQHTY) are cytoplasmic. Residues 51 to 71 (LDYSITNFLAAIFIAFVFGGI) form a helical membrane-spanning segment. Residues 72 to 91 (GESTHEAPSFITQLTQIQDN) are Extracellular-facing. The helical transmembrane segment at 92–112 (WPSVLFAMAGGVGLSIGNLAT) threads the bilayer. Residues 113-115 (QYS) are Cytoplasmic-facing. The helical transmembrane segment at 116–136 (LAFVGLSVTEVTAASITVVVG) threads the bilayer. Residues 137–149 (TTVNYFLDNGLNR) lie on the Extracellular side of the membrane. A helical membrane pass occupies residues 150-170 (ADILFSGVGCFMVAVCLGSAV). Residues 171 to 240 (HSSNSADIKA…RAIKVLGKSM (70 aa)) are Cytoplasmic-facing. 232-239 (AIKVLGKS) provides a ligand contact to ATP. A helical transmembrane segment spans residues 241-261 (VVGLGITFFAGLSFSLFSPLF). Over 262–278 (NLATNDQWHTLKQGVPK) the chain is Extracellular. The helical transmembrane segment at 279–299 (LIVYTAFFYFSLSCFVIAVAL) threads the bilayer. Topologically, residues 300–326 (NISFLYKPVLDSPRSSFREYLSDWNGR) are cytoplasmic. A helical transmembrane segment spans residues 327-347 (GWALAAGLLCGFGNGLQFMGG). The Extracellular portion of the chain corresponds to 348-352 (QAAGY). A helical transmembrane segment spans residues 353–373 (AASDAVQALPLVSTFWGIYLF). The Cytoplasmic portion of the chain corresponds to 374–384 (GEYRRSSTRTY). Residues 385-405 (ALLVGMLVMFTVAVGLLMASA) form a helical membrane-spanning segment. Topologically, residues 406–413 (GERETRFT) are extracellular.

The protein belongs to the plant ureide permease (TC 2.A.7.19) family. As to expression, expressed in lateral roots, rosette leaves, stems, stipules, flower stigma, pedicels and the connective tissue between pollen sacks.

Its subcellular location is the membrane. Functionally, proton-coupled transporter that transports a wide spectrum of oxo derivatives of heterocyclic nitrogen compounds, including allantoin, uric acid and xanthine, but not adenine. Mediates transport of uracil and 5-fluorouracil (a toxic uracil analog). Its function is as follows. Proton-coupled transporter that transports a wide spectrum of oxo derivatives of heterocyclic nitrogen compounds, including allantoin, xanthine and uracil. In Arabidopsis thaliana (Mouse-ear cress), this protein is Ureide permease 5.